The primary structure comprises 66 residues: Large ribosomal subunit protein uL29 (66 aa).

This sequence belongs to the universal ribosomal protein uL29 family.

The polypeptide is Large ribosomal subunit protein uL29 (Rhizobium rhizogenes (strain K84 / ATCC BAA-868) (Agrobacterium radiobacter)).